The chain runs to 541 residues: Glucose-6-phosphate isomerase (541 aa).

Glutamate 353 acts as the Proton donor in catalysis. Active-site residues include histidine 384 and lysine 504.

This sequence belongs to the GPI family.

Its subcellular location is the cytoplasm. The catalysed reaction is alpha-D-glucose 6-phosphate = beta-D-fructose 6-phosphate. Its pathway is carbohydrate biosynthesis; gluconeogenesis. The protein operates within carbohydrate degradation; glycolysis; D-glyceraldehyde 3-phosphate and glycerone phosphate from D-glucose: step 2/4. In terms of biological role, catalyzes the reversible isomerization of glucose-6-phosphate to fructose-6-phosphate. The polypeptide is Glucose-6-phosphate isomerase (Deinococcus radiodurans (strain ATCC 13939 / DSM 20539 / JCM 16871 / CCUG 27074 / LMG 4051 / NBRC 15346 / NCIMB 9279 / VKM B-1422 / R1)).